Here is a 566-residue protein sequence, read N- to C-terminus: KsdD-like steroid dehydrogenase MT0809 (566 aa).

Position 23–54 (23–54 (DAIVVGAGLAGLVAACELADRGLRVLILDQEN)) interacts with FAD.

Belongs to the FAD-dependent oxidoreductase 2 family. FAD is required as a cofactor.

The protein operates within lipid metabolism; steroid biosynthesis. Functionally, able to catalyze the elimination of the C-1 and C-2 hydrogen atoms of the A-ring from the polycyclic ring structure of 3-ketosteroids. In Mycobacterium tuberculosis (strain CDC 1551 / Oshkosh), this protein is KsdD-like steroid dehydrogenase MT0809.